A 703-amino-acid chain; its full sequence is Cycloartenol synthase (703 aa).

PFTB repeat units lie at residues 59-103 (IKKA…QLPE) and 106-148 (QREI…RLLG). Catalysis depends on Asp-435, which acts as the Proton donor. PFTB repeat units lie at residues 461 to 503 (IADG…QNIM), 539 to 579 (IARG…VASG), 587 to 628 (IVKA…VNTG), and 645 to 686 (IERG…KNIF).

This sequence belongs to the terpene cyclase/mutase family.

It carries out the reaction (S)-2,3-epoxysqualene = cycloartenol. Its function is as follows. Converts oxidosqualene to cycloartenol (in vitro). In Dictyostelium discoideum (Social amoeba), this protein is Cycloartenol synthase (cas1).